The chain runs to 152 residues: Small ribosomal subunit protein bS6 (152 aa).

Residues 96 to 152 form a disordered region; it reads HEEGPSAMLQKRDRDDRGERGDRGDRGDRGDRGFGGREDRPRRPRPTEESHGGEEEV.

Belongs to the bacterial ribosomal protein bS6 family.

Functionally, binds together with bS18 to 16S ribosomal RNA. The polypeptide is Small ribosomal subunit protein bS6 (Xanthobacter autotrophicus (strain ATCC BAA-1158 / Py2)).